The chain runs to 194 residues: Large ribosomal subunit protein eL15 (194 aa).

A disordered region spans residues 164 to 194; sequence AGRKARGLRRKGRGAEKVRPSLRANFRKKRR. A compositionally biased stretch (basic residues) spans 166 to 175; sequence RKARGLRRKG.

Belongs to the eukaryotic ribosomal protein eL15 family.

The chain is Large ribosomal subunit protein eL15 (rpl15e) from Archaeoglobus fulgidus (strain ATCC 49558 / DSM 4304 / JCM 9628 / NBRC 100126 / VC-16).